The chain runs to 507 residues: Protoheme IX farnesyltransferase, mitochondrial (507 aa).

The segment covering 72–90 (STSASASTTHDSTLSSSPT) has biased composition (low complexity). The tract at residues 72–136 (STSASASTTH…RGEKPLPPDA (65 aa)) is disordered. Basic residues predominate over residues 99 to 111 (KDHKIAPHRKRQA). The next 8 membrane-spanning stretches (helical) occupy residues 166–186 (LTML…VPEM), 199–219 (PLTL…ANAL), 248–268 (AAVL…YFGV), 270–290 (PTVS…YTPL), 298–318 (TWIG…AAAG), 339–359 (IGGW…FMAL), 392–412 (FVFI…WSFA), and 441–461 (GLFW…LLHK).

The protein belongs to the UbiA prenyltransferase family.

The protein localises to the mitochondrion membrane. The enzyme catalyses heme b + (2E,6E)-farnesyl diphosphate + H2O = Fe(II)-heme o + diphosphate. Functionally, converts protoheme IX and farnesyl diphosphate to heme O. This is Protoheme IX farnesyltransferase, mitochondrial (COX10) from Gibberella zeae (strain ATCC MYA-4620 / CBS 123657 / FGSC 9075 / NRRL 31084 / PH-1) (Wheat head blight fungus).